Here is a 135-residue protein sequence, read N- to C-terminus: Interleukin-4 (135 aa).

Residues 1-24 (MGLTSQLIPALVCLLVCTSHFVHG) form the signal peptide. Cystine bridges form between cysteine 27–cysteine 135, cysteine 48–cysteine 85, and cysteine 70–cysteine 105. N-linked (GlcNAc...) asparagine glycosylation is found at asparagine 62 and asparagine 96.

The protein belongs to the IL-4/IL-13 family.

It is found in the secreted. Functionally, participates in at least several B-cell activation processes as well as of other cell types. It is a costimulator of DNA-synthesis. It induces the expression of class II MHC molecules on resting B-cells. It enhances both secretion and cell surface expression of IgE and IgG1. It also regulates the expression of the low affinity Fc receptor for IgE (CD23) on both lymphocytes and monocytes. Positively regulates IL31RA expression in macrophages. Stimulates autophagy in dendritic cells by interfering with mTORC1 signaling and through the induction of RUFY4. This is Interleukin-4 (IL4) from Capra hircus (Goat).